The chain runs to 358 residues: Aminodeoxyfutalosine deaminase (358 aa).

Positions 32 and 34 each coordinate Zn(2+). 3 residues coordinate substrate: Arg-87, Asp-154, and Gly-188. Zn(2+) is bound at residue His-215. The active-site Proton donor is Glu-218. Asp-296 is a Zn(2+) binding site.

This sequence belongs to the metallo-dependent hydrolases superfamily. Adenosine and AMP deaminases family. Zn(2+) serves as cofactor.

The catalysed reaction is 6-amino-6-deoxyfutalosine + H2O + H(+) = futalosine + NH4(+). Its pathway is quinol/quinone metabolism; menaquinone biosynthesis. Functionally, catalyzes the deamination of aminodeoxyfutalosine (AFL) into futalosine (FL), a step in the biosynthesis of menaquinone (MK, vitamin K2). To a lesser extent, can also deaminate adenosine, 5'-methylthioadenosine, 5'-deoxyadenosine, and 2'-deoxyadenosine. This Streptomyces avermitilis (strain ATCC 31267 / DSM 46492 / JCM 5070 / NBRC 14893 / NCIMB 12804 / NRRL 8165 / MA-4680) protein is Aminodeoxyfutalosine deaminase (add2).